The chain runs to 1415 residues: Bridge-like lipid transfer protein family member 3B (1415 aa).

Residues 3 to 94 (GLIKKQILKH…DKVIMEMSTC (92 aa)) form the Chorein N-terminal domain. 2 disordered regions span residues 267 to 300 (STEQ…STTP) and 882 to 904 (KSPL…SEGV). A compositionally biased stretch (polar residues) spans 275-300 (ASETTQSPTPPVSSQQVKNPQTSTTP). Residues 1367–1404 (KAAGISKEQLVEENECLKQELAKTKMALAESHMERDRL) adopt a coiled-coil conformation.

The protein localises to the cytoplasm. The protein resides in the cytosol. It is found in the early endosome. Functionally, tube-forming lipid transport protein which mediates the transfer of lipids between membranes at organelle contact sites. Required for retrograde traffic of vesicle clusters in the early endocytic pathway to the Golgi complex. The polypeptide is Bridge-like lipid transfer protein family member 3B (bltp3b) (Xenopus laevis (African clawed frog)).